Reading from the N-terminus, the 351-residue chain is Histidinol-phosphate aminotransferase (351 aa).

Lys213 bears the N6-(pyridoxal phosphate)lysine mark.

Belongs to the class-II pyridoxal-phosphate-dependent aminotransferase family. Histidinol-phosphate aminotransferase subfamily. As to quaternary structure, homodimer. Pyridoxal 5'-phosphate is required as a cofactor.

The catalysed reaction is L-histidinol phosphate + 2-oxoglutarate = 3-(imidazol-4-yl)-2-oxopropyl phosphate + L-glutamate. It catalyses the reaction L-histidine + 2-oxoglutarate = 3-(imidazol-5-yl)pyruvate + L-glutamate. Its pathway is amino-acid biosynthesis; L-histidine biosynthesis; L-histidine from 5-phospho-alpha-D-ribose 1-diphosphate: step 7/9. This is Histidinol-phosphate aminotransferase from Caldanaerobacter subterraneus subsp. tengcongensis (strain DSM 15242 / JCM 11007 / NBRC 100824 / MB4) (Thermoanaerobacter tengcongensis).